Here is a 272-residue protein sequence, read N- to C-terminus: Bis(5'-nucleosyl)-tetraphosphatase, symmetrical (272 aa).

It belongs to the Ap4A hydrolase family.

The catalysed reaction is P(1),P(4)-bis(5'-adenosyl) tetraphosphate + H2O = 2 ADP + 2 H(+). Its function is as follows. Hydrolyzes diadenosine 5',5'''-P1,P4-tetraphosphate to yield ADP. In Shewanella frigidimarina (strain NCIMB 400), this protein is Bis(5'-nucleosyl)-tetraphosphatase, symmetrical.